Here is a 305-residue protein sequence, read N- to C-terminus: Ornithine carbamoyltransferase (305 aa).

Residues 52–55 (STRT), glutamine 79, arginine 103, and 130–133 (HPLQ) each bind carbamoyl phosphate. Residues asparagine 162, aspartate 224, and 228-229 (SM) each bind L-ornithine. Carbamoyl phosphate is bound by residues 264–265 (CL) and arginine 292.

The protein belongs to the aspartate/ornithine carbamoyltransferase superfamily. OTCase family.

Its subcellular location is the cytoplasm. It catalyses the reaction carbamoyl phosphate + L-ornithine = L-citrulline + phosphate + H(+). It participates in amino-acid biosynthesis; L-arginine biosynthesis; L-arginine from L-ornithine and carbamoyl phosphate: step 1/3. Its function is as follows. Reversibly catalyzes the transfer of the carbamoyl group from carbamoyl phosphate (CP) to the N(epsilon) atom of ornithine (ORN) to produce L-citrulline. This Pyrobaculum islandicum (strain DSM 4184 / JCM 9189 / GEO3) protein is Ornithine carbamoyltransferase.